The sequence spans 301 residues: Probable alpha-L-glutamate ligase (301 aa).

An ATP-grasp domain is found at 104–287 (LQILARKGIG…VAGKIIEYLE (184 aa)). Residues Lys-141, 178–179 (EY), Asp-187, and 211–213 (RSN) each bind ATP. 3 residues coordinate Mg(2+): Asp-248, Glu-260, and Asn-262. Positions 248, 260, and 262 each coordinate Mn(2+).

This sequence belongs to the RimK family. It depends on Mg(2+) as a cofactor. Requires Mn(2+) as cofactor.

In Picosynechococcus sp. (strain ATCC 27264 / PCC 7002 / PR-6) (Agmenellum quadruplicatum), this protein is Probable alpha-L-glutamate ligase.